A 239-amino-acid chain; its full sequence is DNA repair protein RecO (239 aa).

It belongs to the RecO family.

Its function is as follows. Involved in DNA repair and RecF pathway recombination. This is DNA repair protein RecO from Bifidobacterium animalis subsp. lactis (strain AD011).